Reading from the N-terminus, the 65-residue chain is UPF0434 protein Rpal_0270 (65 aa).

Belongs to the UPF0434 family.

This is UPF0434 protein Rpal_0270 from Rhodopseudomonas palustris (strain TIE-1).